The primary structure comprises 368 residues: Phosphoserine aminotransferase (368 aa).

Arg42 is an L-glutamate binding site. The pyridoxal 5'-phosphate site is built by Trp101, Thr151, Asp175, and Gln198. Lys199 is modified (N6-(pyridoxal phosphate)lysine). 240–241 is a pyridoxal 5'-phosphate binding site; that stretch reads NT.

This sequence belongs to the class-V pyridoxal-phosphate-dependent aminotransferase family. SerC subfamily. Homodimer. It depends on pyridoxal 5'-phosphate as a cofactor.

The protein localises to the cytoplasm. The catalysed reaction is O-phospho-L-serine + 2-oxoglutarate = 3-phosphooxypyruvate + L-glutamate. It carries out the reaction 4-(phosphooxy)-L-threonine + 2-oxoglutarate = (R)-3-hydroxy-2-oxo-4-phosphooxybutanoate + L-glutamate. It functions in the pathway amino-acid biosynthesis; L-serine biosynthesis; L-serine from 3-phospho-D-glycerate: step 2/3. Its pathway is cofactor biosynthesis; pyridoxine 5'-phosphate biosynthesis; pyridoxine 5'-phosphate from D-erythrose 4-phosphate: step 3/5. Catalyzes the reversible conversion of 3-phosphohydroxypyruvate to phosphoserine and of 3-hydroxy-2-oxo-4-phosphonooxybutanoate to phosphohydroxythreonine. This Polaromonas sp. (strain JS666 / ATCC BAA-500) protein is Phosphoserine aminotransferase.